The chain runs to 216 residues: ATP phosphoribosyltransferase (216 aa).

This sequence belongs to the ATP phosphoribosyltransferase family. Short subfamily. As to quaternary structure, heteromultimer composed of HisG and HisZ subunits.

The protein resides in the cytoplasm. The enzyme catalyses 1-(5-phospho-beta-D-ribosyl)-ATP + diphosphate = 5-phospho-alpha-D-ribose 1-diphosphate + ATP. The protein operates within amino-acid biosynthesis; L-histidine biosynthesis; L-histidine from 5-phospho-alpha-D-ribose 1-diphosphate: step 1/9. Functionally, catalyzes the condensation of ATP and 5-phosphoribose 1-diphosphate to form N'-(5'-phosphoribosyl)-ATP (PR-ATP). Has a crucial role in the pathway because the rate of histidine biosynthesis seems to be controlled primarily by regulation of HisG enzymatic activity. In Streptococcus thermophilus (strain ATCC BAA-491 / LMD-9), this protein is ATP phosphoribosyltransferase.